The primary structure comprises 232 residues: Enolase-phosphatase E1 (232 aa).

Belongs to the HAD-like hydrolase superfamily. MasA/MtnC family. As to quaternary structure, monomer. Mg(2+) is required as a cofactor.

The catalysed reaction is 5-methylsulfanyl-2,3-dioxopentyl phosphate + H2O = 1,2-dihydroxy-5-(methylsulfanyl)pent-1-en-3-one + phosphate. The protein operates within amino-acid biosynthesis; L-methionine biosynthesis via salvage pathway; L-methionine from S-methyl-5-thio-alpha-D-ribose 1-phosphate: step 3/6. Its pathway is amino-acid biosynthesis; L-methionine biosynthesis via salvage pathway; L-methionine from S-methyl-5-thio-alpha-D-ribose 1-phosphate: step 4/6. Functionally, bifunctional enzyme that catalyzes the enolization of 2,3-diketo-5-methylthiopentyl-1-phosphate (DK-MTP-1-P) into the intermediate 2-hydroxy-3-keto-5-methylthiopentenyl-1-phosphate (HK-MTPenyl-1-P), which is then dephosphorylated to form the acireductone 1,2-dihydroxy-3-keto-5-methylthiopentene (DHK-MTPene). The polypeptide is Enolase-phosphatase E1 (Sorangium cellulosum (strain So ce56) (Polyangium cellulosum (strain So ce56))).